Reading from the N-terminus, the 195-residue chain is Imidazole glycerol phosphate synthase subunit HisH (195 aa).

One can recognise a Glutamine amidotransferase type-1 domain in the interval 1–195; sequence MIAVVDLGIG…LRLLENFRRL (195 aa). The Nucleophile role is filled by cysteine 72. Active-site residues include histidine 177 and glutamate 179.

In terms of assembly, heterodimer of HisH and HisF.

The protein localises to the cytoplasm. It carries out the reaction 5-[(5-phospho-1-deoxy-D-ribulos-1-ylimino)methylamino]-1-(5-phospho-beta-D-ribosyl)imidazole-4-carboxamide + L-glutamine = D-erythro-1-(imidazol-4-yl)glycerol 3-phosphate + 5-amino-1-(5-phospho-beta-D-ribosyl)imidazole-4-carboxamide + L-glutamate + H(+). The enzyme catalyses L-glutamine + H2O = L-glutamate + NH4(+). Its pathway is amino-acid biosynthesis; L-histidine biosynthesis; L-histidine from 5-phospho-alpha-D-ribose 1-diphosphate: step 5/9. In terms of biological role, IGPS catalyzes the conversion of PRFAR and glutamine to IGP, AICAR and glutamate. The HisH subunit catalyzes the hydrolysis of glutamine to glutamate and ammonia as part of the synthesis of IGP and AICAR. The resulting ammonia molecule is channeled to the active site of HisF. In Thermococcus kodakarensis (strain ATCC BAA-918 / JCM 12380 / KOD1) (Pyrococcus kodakaraensis (strain KOD1)), this protein is Imidazole glycerol phosphate synthase subunit HisH.